The sequence spans 69 residues: Chondroitin proteoglycan 9 (69 aa).

The first 19 residues, 1–19, serve as a signal peptide directing secretion; the sequence is MHLWQLVLLVILFFGAAFG. 2 O-linked (Xyl...) (chondroitin sulfate) serine glycosylation sites follow: Ser-25 and Ser-27.

In Caenorhabditis elegans, this protein is Chondroitin proteoglycan 9.